The chain runs to 213 residues: Pyrrolidone-carboxylate peptidase (213 aa).

Active-site residues include E80, C143, and H165.

It belongs to the peptidase C15 family. As to quaternary structure, homotetramer.

The protein localises to the cytoplasm. It carries out the reaction Release of an N-terminal pyroglutamyl group from a polypeptide, the second amino acid generally not being Pro.. Functionally, removes 5-oxoproline from various penultimate amino acid residues except L-proline. The sequence is that of Pyrrolidone-carboxylate peptidase from Erwinia tasmaniensis (strain DSM 17950 / CFBP 7177 / CIP 109463 / NCPPB 4357 / Et1/99).